We begin with the raw amino-acid sequence, 110 residues long: Nucleotide-binding protein HI1146 homolog (110 aa).

The protein belongs to the RapZ-like family.

Functionally, displays ATPase and GTPase activities. The protein is Nucleotide-binding protein HI1146 homolog of Aggregatibacter actinomycetemcomitans (Actinobacillus actinomycetemcomitans).